A 333-amino-acid polypeptide reads, in one-letter code: Adenosine deaminase (333 aa).

The Zn(2+) site is built by His12 and His14. Substrate-binding residues include His14, Asp16, and Gly170. His197 lines the Zn(2+) pocket. Catalysis depends on Glu200, which acts as the Proton donor. Position 278 (Asp278) interacts with Zn(2+). Asp279 contacts substrate.

Belongs to the metallo-dependent hydrolases superfamily. Adenosine and AMP deaminases family. Adenosine deaminase subfamily. Zn(2+) is required as a cofactor.

It catalyses the reaction adenosine + H2O + H(+) = inosine + NH4(+). It carries out the reaction 2'-deoxyadenosine + H2O + H(+) = 2'-deoxyinosine + NH4(+). Its function is as follows. Catalyzes the hydrolytic deamination of adenosine and 2-deoxyadenosine. The protein is Adenosine deaminase of Photorhabdus laumondii subsp. laumondii (strain DSM 15139 / CIP 105565 / TT01) (Photorhabdus luminescens subsp. laumondii).